A 357-amino-acid polypeptide reads, in one-letter code: MAGNTIGQLFRVTTFGESHGIALGCIVDGVPPNLELSEKDIQPDLDRRKPGTSRYTTPRREDDEVQILSGVFEGKTTGTSIGMIIKNGDQRSQDYGDIKDRFRPGHADFTYQQKYGIRDYRGGGRSSARETAMRVAAGAIAKKYLREHFGIEVRGFLSQIGHVKVAPQTIGDIDWEKVNSNPFFCPDESAVEKFDELIRELKKEGDSIGAKLTVIAENVPVGLGEPVFDRLDADLAHALMGINAVKGVEIGDGFAVVEQRGSEHRDEMTPDGFESNHAGGILGGISSGQPIIATIALKPTSSITIPGRSINLKGEAVEVVTKGRHDPCVGIRAVPIAEAMMAIVLLDHLLRFKAQCK.

Residues 38–49 (EKDIQPDLDRRK) are compositionally biased toward basic and acidic residues. The interval 38-60 (EKDIQPDLDRRKPGTSRYTTPRR) is disordered. The NADP(+) site is built by R48 and R54. Residues 125-127 (RSS), 243-244 (NA), G283, 298-302 (KPTSS), and R324 contribute to the FMN site.

The protein belongs to the chorismate synthase family. Homotetramer. It depends on FMNH2 as a cofactor.

It catalyses the reaction 5-O-(1-carboxyvinyl)-3-phosphoshikimate = chorismate + phosphate. It participates in metabolic intermediate biosynthesis; chorismate biosynthesis; chorismate from D-erythrose 4-phosphate and phosphoenolpyruvate: step 7/7. Its function is as follows. Catalyzes the anti-1,4-elimination of the C-3 phosphate and the C-6 proR hydrogen from 5-enolpyruvylshikimate-3-phosphate (EPSP) to yield chorismate, which is the branch point compound that serves as the starting substrate for the three terminal pathways of aromatic amino acid biosynthesis. This reaction introduces a second double bond into the aromatic ring system. The sequence is that of Chorismate synthase from Haemophilus influenzae (strain PittGG).